The primary structure comprises 389 residues: Equilibrative nucleotide transporter 8 (389 aa).

The next 10 membrane-spanning stretches (helical) occupy residues 19-39 (VAYV…NALI), 57-77 (TFTV…MTWN), 87-107 (NLGF…DWVW), 119-139 (LMVG…GSLI), 150-170 (MQAI…LRIA), 187-207 (HSYF…CNVL), 238-258 (WPAS…PGFI), 266-286 (LLQS…DFVG), 331-351 (VVVL…VLMI), and 367-387 (IFMV…GWLW).

This sequence belongs to the SLC29A/ENT transporter (TC 2.A.57) family. Expressed in stems, flowers and siliques.

It localises to the cell membrane. Its function is as follows. May be involved in nucleoside transport. The polypeptide is Equilibrative nucleotide transporter 8 (ETN8) (Arabidopsis thaliana (Mouse-ear cress)).